Consider the following 427-residue polypeptide: Serine hydroxymethyltransferase (427 aa).

120 to 122 provides a ligand contact to (6S)-5,6,7,8-tetrahydrofolate; that stretch reads GHI. Lys-226 carries the N6-(pyridoxal phosphate)lysine modification.

This sequence belongs to the SHMT family. As to quaternary structure, homodimer. Pyridoxal 5'-phosphate is required as a cofactor.

The protein localises to the cytoplasm. The protein operates within amino-acid biosynthesis; glycine biosynthesis; glycine from L-serine: step 1/1. In terms of biological role, catalyzes the reversible interconversion of serine and glycine with a modified folate serving as the one-carbon carrier. Also exhibits a pteridine-independent aldolase activity toward beta-hydroxyamino acids, producing glycine and aldehydes, via a retro-aldol mechanism. This Pyrococcus horikoshii (strain ATCC 700860 / DSM 12428 / JCM 9974 / NBRC 100139 / OT-3) protein is Serine hydroxymethyltransferase.